The sequence spans 375 residues: Anhydro-N-acetylmuramic acid kinase 1 (375 aa).

Residue 20–27 (GTSFDGVD) coordinates ATP. The segment at 351–375 (APSTTGVAAPVGGGRRSKPGARELS) is disordered.

This sequence belongs to the anhydro-N-acetylmuramic acid kinase family.

It catalyses the reaction 1,6-anhydro-N-acetyl-beta-muramate + ATP + H2O = N-acetyl-D-muramate 6-phosphate + ADP + H(+). It functions in the pathway amino-sugar metabolism; 1,6-anhydro-N-acetylmuramate degradation. It participates in cell wall biogenesis; peptidoglycan recycling. Functionally, catalyzes the specific phosphorylation of 1,6-anhydro-N-acetylmuramic acid (anhMurNAc) with the simultaneous cleavage of the 1,6-anhydro ring, generating MurNAc-6-P. Is required for the utilization of anhMurNAc either imported from the medium or derived from its own cell wall murein, and thus plays a role in cell wall recycling. The sequence is that of Anhydro-N-acetylmuramic acid kinase 1 from Jannaschia sp. (strain CCS1).